The sequence spans 113 residues: UPF0122 protein LSEI_1603 (113 aa).

The protein belongs to the UPF0122 family.

Might take part in the signal recognition particle (SRP) pathway. This is inferred from the conservation of its genetic proximity to ftsY/ffh. May be a regulatory protein. In Lacticaseibacillus paracasei (strain ATCC 334 / BCRC 17002 / CCUG 31169 / CIP 107868 / KCTC 3260 / NRRL B-441) (Lactobacillus paracasei), this protein is UPF0122 protein LSEI_1603.